The following is a 711-amino-acid chain: C-Jun-amino-terminal kinase-interacting protein 1 (711 aa).

A disordered region spans residues Met1–Ile27. Low complexity predominate over residues Ala14–Leu25. 3 positions are modified to phosphoserine: Ser15, Ser29, and Ser40. Positions Ala78 to Thr371 are disordered. Phosphothreonine; by MAPK8, MAPK9 and MAPK10 is present on Thr103. Residues Gly105–Glu116 show a composition bias toward acidic residues. A JNK-binding domain (JBD) region spans residues Pro127–Pro285. Low complexity predominate over residues Gly139–Gly149. Ser152 bears the Phosphoserine mark. A minimal inhibitory domain (MID) region spans residues Arg157–Thr176. Residues Thr162–Leu182 are compositionally biased toward polar residues. Ser181, Ser187, Ser193, Ser195, and Ser196 each carry phosphoserine. Positions Arg194–Gln204 are enriched in polar residues. Position 205 is a phosphothreonine; by MAPK8, MAPK9 and MAPK10 (Thr205). Ser214 carries the phosphoserine modification. Polar residues predominate over residues Asp228–Gln244. Residues Ile267–Ala277 are compositionally biased toward basic and acidic residues. Positions Leu283 to Ser471 are interaction with MAP3K7. Ser311, Ser328, Ser330, Ser340, Ser355, Ser366, Ser369, Ser407, and Ser409 each carry phosphoserine. Short sequence motifs (D-box) lie at residues Arg353 to Pro360 and Arg364 to Ser372. Residue Thr411 is modified to Phosphothreonine. Residues Glu429–Glu451 are disordered. Ser444 and Ser447 each carry phosphoserine. Position 448 is a phosphothreonine (Thr448). Phosphoserine occurs at positions 469, 471, 472, and 473. The tract at residues Ser471–Ile660 is interaction with VRK2. In terms of domain architecture, SH3 spans Glu488–Lys549. The PID domain occupies Ser561 to Glu700.

Belongs to the JIP scaffold family. In terms of assembly, forms homo- or heterooligomeric complexes. Binds specific components of the JNK signaling pathway namely, MAPK8/JNK1, MAPK9/JNK2, MAPK10/JNK3, MAP2K7/MKK7, MAP3K11/MLK3 and DLK1. Also binds the proline-rich domain-containing splice variant of apolipoprotein E receptor 2 (ApoER2). Interacts, via the PID domain, with ARHGEF28. Binds the cytoplasmic tails of LRP1 and LRP2 (Megalin). Binds the TPR motif-containing C-terminal of KNS2, then the pre-assembled MAPK8IP1 scaffolding complexes are transported as a cargo of kinesin, to the required subcellular location. Interacts with the cytoplasmic domain of APP. Interacts with DCLK2. Interacts with MAP3K7/TAK1. Interacts with isoform 1 and isoform 2 of VRK2. Found in a complex with SH3RF1, RAC1, MAP3K11/MLK3, MAP2K7/MKK7 and MAPK8/JNK1. Found in a complex with SH3RF1, RAC2, MAP3K7/TAK1, MAP2K7/MKK7, MAPK8/JNK1 and MAPK9/JNK2. Interacts with SH3RF2. Post-translationally, phosphorylated by MAPK8, MAPK9 and MAPK10. Phosphorylation on Thr-103 is also necessary for the dissociation and activation of MAP3K12. Phosphorylated by isoform 1 and isoform 2 of VRK2. Hyperphosphorylated during mitosis following activation of stress-activated and MAP kinases. In terms of processing, ubiquitinated. Two preliminary events are required to prime for ubiquitination; phosphorylation and an increased in intracellular calcium concentration. Then, the calcium influx initiates ubiquitination and degradation by the ubiquitin-proteasome pathway. Highly expressed in brain. Expressed in neurons, localizing to neurite tips in differentiating cells. Also expressed in the pancreas, testis and prostate. Low levels in heart, ovary and small intestine. Decreased levels in pancreatic beta cells sensitize cells to IL-1-beta-induced apoptosis.

It is found in the cytoplasm. The protein resides in the perinuclear region. The protein localises to the nucleus. It localises to the endoplasmic reticulum membrane. Its subcellular location is the mitochondrion membrane. In terms of biological role, the JNK-interacting protein (JIP) group of scaffold proteins selectively mediates JNK signaling by aggregating specific components of the MAPK cascade to form a functional JNK signaling module. Required for JNK activation in response to excitotoxic stress. Cytoplasmic MAPK8IP1 causes inhibition of JNK-regulated activity by retaining JNK in the cytoplasm and inhibiting JNK phosphorylation of c-Jun. May also participate in ApoER2-specific reelin signaling. Directly, or indirectly, regulates GLUT2 gene expression and beta-cell function. Appears to have a role in cell signaling in mature and developing nerve terminals. May function as a regulator of vesicle transport, through interactions with the JNK-signaling components and motor proteins. Functions as an anti-apoptotic protein and whose level seems to influence the beta-cell death or survival response. Acts as a scaffold protein that coordinates with SH3RF1 in organizing different components of the JNK pathway, including RAC1 or RAC2, MAP3K11/MLK3 or MAP3K7/TAK1, MAP2K7/MKK7, MAPK8/JNK1 and/or MAPK9/JNK2 into a functional multiprotein complex to ensure the effective activation of the JNK signaling pathway. Regulates the activation of MAPK8/JNK1 and differentiation of CD8(+) T-cells. This chain is C-Jun-amino-terminal kinase-interacting protein 1 (MAPK8IP1), found in Homo sapiens (Human).